The chain runs to 169 residues: uncharacterized protein (169 aa).

The N-terminal 91 residues, 1 to 91, are a transit peptide targeting the mitochondrion; that stretch reads MFSSTFRRLA…NKEQYTVRCL (91 aa). Residues 54–76 are disordered; it reads PQPKSPGSLPSSTRTAPNPNGEE. Residues 61–71 are compositionally biased toward polar residues; the sequence is SLPSSTRTAPN.

Its subcellular location is the mitochondrion. This is an uncharacterized protein from Trypanosoma brucei brucei (strain 927/4 GUTat10.1).